A 429-amino-acid chain; its full sequence is Adenylosuccinate synthetase (429 aa).

Residues 12-18 and 40-42 each bind GTP; these read GDEGKGK and GHT. Asp-13 (proton acceptor) is an active-site residue. The Mg(2+) site is built by Asp-13 and Gly-40. Residues 13 to 16, 38 to 41, Thr-129, Arg-143, Gln-224, Thr-239, and Arg-303 each bind IMP; these read DEGK and NAGH. The active-site Proton donor is the His-41. 299 to 305 lines the substrate pocket; sequence VTTGRAR. Residues Arg-305, 331–333, and 413–415 each bind GTP; these read KLD and GVG.

Belongs to the adenylosuccinate synthetase family. As to quaternary structure, homodimer. Mg(2+) serves as cofactor.

It localises to the cytoplasm. The enzyme catalyses IMP + L-aspartate + GTP = N(6)-(1,2-dicarboxyethyl)-AMP + GDP + phosphate + 2 H(+). It participates in purine metabolism; AMP biosynthesis via de novo pathway; AMP from IMP: step 1/2. Functionally, plays an important role in the de novo pathway of purine nucleotide biosynthesis. Catalyzes the first committed step in the biosynthesis of AMP from IMP. In Rhodococcus erythropolis (strain PR4 / NBRC 100887), this protein is Adenylosuccinate synthetase.